The chain runs to 406 residues: Imidazolonepropionase (406 aa).

His-72 and His-74 together coordinate Fe(3+). Positions 72 and 74 each coordinate Zn(2+). Positions 81, 144, and 177 each coordinate 4-imidazolone-5-propanoate. Position 144 (Tyr-144) interacts with N-formimidoyl-L-glutamate. His-242 is a Fe(3+) binding site. Residue His-242 coordinates Zn(2+). Residue Gln-245 participates in 4-imidazolone-5-propanoate binding. Residue Asp-317 participates in Fe(3+) binding. A Zn(2+)-binding site is contributed by Asp-317. Residues Asn-319 and Gly-321 each contribute to the N-formimidoyl-L-glutamate site. Thr-322 serves as a coordination point for 4-imidazolone-5-propanoate.

This sequence belongs to the metallo-dependent hydrolases superfamily. HutI family. It depends on Zn(2+) as a cofactor. Fe(3+) serves as cofactor.

It localises to the cytoplasm. The enzyme catalyses 4-imidazolone-5-propanoate + H2O = N-formimidoyl-L-glutamate. It functions in the pathway amino-acid degradation; L-histidine degradation into L-glutamate; N-formimidoyl-L-glutamate from L-histidine: step 3/3. In terms of biological role, catalyzes the hydrolytic cleavage of the carbon-nitrogen bond in imidazolone-5-propanoate to yield N-formimidoyl-L-glutamate. It is the third step in the universal histidine degradation pathway. The polypeptide is Imidazolonepropionase (Yersinia pestis bv. Antiqua (strain Antiqua)).